Consider the following 237-residue polypeptide: RNA chaperone ProQ (237 aa).

The disordered stretch occupies residues 106–188 (AKARVQAQRA…QPRPVPVTDI (83 aa)). Over residues 146 to 158 (PRREAGAAPENRK) the composition is skewed to basic and acidic residues.

Belongs to the ProQ family.

The protein localises to the cytoplasm. In terms of biological role, RNA chaperone with significant RNA binding, RNA strand exchange and RNA duplexing activities. May regulate ProP activity through an RNA-based, post-transcriptional mechanism. This chain is RNA chaperone ProQ, found in Yersinia pseudotuberculosis serotype O:1b (strain IP 31758).